Consider the following 258-residue polypeptide: Acidic leucine-rich nuclear phosphoprotein 32 family member E (258 aa).

Residue Met-1 is modified to N-acetylmethionine. LRR repeat units follow at residues Glu-18–Asn-38, Glu-43–Asn-64, Lys-65–Cys-87, and Asn-89–Gln-110. A Glycyl lysine isopeptide (Lys-Gly) (interchain with G-Cter in SUMO2) cross-link involves residue Lys-68. An LRRCT domain is found at Cys-123–Glu-161. Acidic residues-rich tracts occupy residues Asp-149–Val-206 and Ile-216–Glu-238. The interval Asp-149 to Asp-258 is disordered. The ZID domain stretch occupies residues Glu-205–Asp-258. The segment covering Gly-239–Ala-249 has biased composition (basic and acidic residues).

Belongs to the ANP32 family. As to quaternary structure, component of a SWR1-like complex, composed of EP400, KAT5/TIP60, TRRAP, BRD8, RUVBL1, RUVBL2, ING3 and ANP32E; the complex does not contain SRCAP. Interacts with H2A.Z/H2AZ1. Interacts with the importin alpha KPNA1 and KPNA2. Post-translationally, phosphorylated. The phosphorylation is nuclear localization signal (NLS)-dependent.

It localises to the cytoplasm. The protein localises to the nucleus. Its function is as follows. Histone chaperone that specifically mediates the genome-wide removal of histone H2A.Z/H2AZ1 from the nucleosome: removes H2A.Z/H2AZ1 from its normal sites of deposition, especially from enhancer and insulator regions. Not involved in deposition of H2A.Z/H2AZ1 in the nucleosome. May stabilize the evicted H2A.Z/H2AZ1-H2B dimer, thus shifting the equilibrium towards dissociation and the off-chromatin state. Inhibits activity of protein phosphatase 2A (PP2A). Does not inhibit protein phosphatase 1. May play a role in cerebellar development and synaptogenesis. In Rattus norvegicus (Rat), this protein is Acidic leucine-rich nuclear phosphoprotein 32 family member E (Anp32e).